Reading from the N-terminus, the 196-residue chain is UPF0056 membrane protein BUsg_434 (196 aa).

The next 6 membrane-spanning stretches (helical) occupy residues 8-28 (TILLILIMDPLGNLPIFMTIL), 45-65 (IIALIVMLIFLFVGEKILTIL), 71-91 (TVSISGGIILFLIAIKMIFPS), 105-125 (FLVPLAIPLVAGPSLLATLML), 134-154 (MPYLVGSLLIAWFFTIIILLL), and 174-194 (MGLILIMLSTQMFLDGIKAWF).

Belongs to the UPF0056 (MarC) family.

It localises to the cell membrane. This chain is UPF0056 membrane protein BUsg_434, found in Buchnera aphidicola subsp. Schizaphis graminum (strain Sg).